A 199-amino-acid chain; its full sequence is Putative lectin L633 (199 aa).

An N-terminal signal peptide occupies residues 1 to 25 (MNILLLLMLLTSIILLVILIFLAYN). Over residues 35–48 (CITPAPESQSISPD) the composition is skewed to polar residues. The segment at 35-74 (CITPAPESQSISPDQTTQLQTTTPVTSTPSNPTPTTIIPN) is disordered. The segment covering 49 to 73 (QTTQLQTTTPVTSTPSNPTPTTIIP) has biased composition (low complexity). The Bulb-type lectin domain maps to 84–195 (EIVSNGDNVL…LGQELWCATR (112 aa)). An N-linked (GlcNAc...) asparagine; by host glycan is attached at N121.

The protein resides in the secreted. The chain is Putative lectin L633 from Acanthamoeba polyphaga (Amoeba).